The following is a 909-amino-acid chain: Valine--tRNA ligase (909 aa).

The short motif at 52-62 (PNVTGVLHVGH) is the 'HIGH' region element. The 'KMSKS' region motif lies at 542 to 546 (KMSKS). Residue Lys-545 participates in ATP binding. Residues 843–902 (IDIDQLKKRFEKELEKNEQNASKIDSKLKNENFVKNAPPEVIEGEKEKHAEFLRRIEKLK) adopt a coiled-coil conformation.

It belongs to the class-I aminoacyl-tRNA synthetase family. ValS type 1 subfamily. Monomer.

The protein resides in the cytoplasm. The enzyme catalyses tRNA(Val) + L-valine + ATP = L-valyl-tRNA(Val) + AMP + diphosphate. Catalyzes the attachment of valine to tRNA(Val). As ValRS can inadvertently accommodate and process structurally similar amino acids such as threonine, to avoid such errors, it has a 'posttransfer' editing activity that hydrolyzes mischarged Thr-tRNA(Val) in a tRNA-dependent manner. This is Valine--tRNA ligase from Treponema denticola (strain ATCC 35405 / DSM 14222 / CIP 103919 / JCM 8153 / KCTC 15104).